Consider the following 727-residue polypeptide: NADH-ubiquinone oxidoreductase 75 kDa subunit, mitochondrial (727 aa).

The transit peptide at 1-23 (MLRIPVRKALVGLSKSPKGCVRT) directs the protein to the mitochondrion. A 2Fe-2S ferredoxin-type domain is found at 30–108 (NLIEVFVDGQ…GWNILTNSEK (79 aa)). The [2Fe-2S] cluster site is built by Cys64, Cys75, and Cys78. Lys84 carries the post-translational modification N6-acetyllysine. A [2Fe-2S] cluster-binding site is contributed by Cys92. The region spanning 108–147 (KSKKAREGVMEFLLANHPLDCPICDQGGECDLQDQSMMFG) is the 4Fe-4S His(Cys)3-ligated-type domain. Residues His124, Cys128, Cys131, Cys137, Cys176, Cys179, Cys182, and Cys226 each coordinate [4Fe-4S] cluster. A 4Fe-4S Mo/W bis-MGD-type domain is found at 245–301 (TRKTESIDVMDAVGSNIVVSTRTGEVMRILPRMHEDINEEWISDKTRFAYDGLKRQR). N6-acetyllysine is present on residues Lys467, Lys499, and Lys709.

It belongs to the complex I 75 kDa subunit family. In terms of assembly, core subunit of respiratory chain NADH dehydrogenase (Complex I) which is composed of 45 different subunits. This is the largest subunit of complex I and it is a component of the iron-sulfur (IP) fragment of the enzyme. Complex I associates with ubiquinol-cytochrome reductase complex (Complex III) to form supercomplexes. Interacts with MDM2 and AKAP1. [2Fe-2S] cluster serves as cofactor. It depends on [4Fe-4S] cluster as a cofactor.

The protein localises to the mitochondrion inner membrane. The enzyme catalyses a ubiquinone + NADH + 5 H(+)(in) = a ubiquinol + NAD(+) + 4 H(+)(out). In terms of biological role, core subunit of the mitochondrial membrane respiratory chain NADH dehydrogenase (Complex I) which catalyzes electron transfer from NADH through the respiratory chain, using ubiquinone as an electron acceptor. Essential for catalysing the entry and efficient transfer of electrons within complex I. Plays a key role in the assembly and stability of complex I and participates in the association of complex I with ubiquinol-cytochrome reductase complex (Complex III) to form supercomplexes. In Macaca fascicularis (Crab-eating macaque), this protein is NADH-ubiquinone oxidoreductase 75 kDa subunit, mitochondrial (NDUFS1).